The primary structure comprises 327 residues: MVREKVKVSTRTLQWKCVESRRDSKRLYYGRFILSPLMKGQADTIGIAMRRALLGEMEGTCITRVKSENIPHDYSNIVGIQESVHEILMNLNEIVLRSNLYGTRNALICVQGPGYITARDIILPPSVEIVDNTQHIATLTEPIDLCIGLKIERNRGYSLKISNNLEDRSYPIDAVFMPVQNANHSIHSYGNGNEKQEILFLEIWTNGSLTPKEALHEASRNLINLFIPFLHVEEETFYLENNQHQVTLPFFPFHNRFFNLRKKKKELAFQYIFIDQLELPPRIYNCLKKSNIHTLLDLLNNSQEDLIKIEHFHVEDVKKILDILEKK.

The tract at residues 1 to 233 (MVREKVKVST…NLFIPFLHVE (233 aa)) is alpha N-terminal domain (alpha-NTD). The interval 267-327 (LAFQYIFIDQ…KKILDILEKK (61 aa)) is alpha C-terminal domain (alpha-CTD).

It belongs to the RNA polymerase alpha chain family. As to quaternary structure, in plastids the minimal PEP RNA polymerase catalytic core is composed of four subunits: alpha, beta, beta', and beta''. When a (nuclear-encoded) sigma factor is associated with the core the holoenzyme is formed, which can initiate transcription.

It is found in the plastid. The protein localises to the chloroplast. The enzyme catalyses RNA(n) + a ribonucleoside 5'-triphosphate = RNA(n+1) + diphosphate. DNA-dependent RNA polymerase catalyzes the transcription of DNA into RNA using the four ribonucleoside triphosphates as substrates. This Crucihimalaya wallichii (Rock-cress) protein is DNA-directed RNA polymerase subunit alpha.